An 862-amino-acid chain; its full sequence is uncharacterized protein (862 aa).

The first 25 residues, methionine 1 to glycine 25, serve as a signal peptide directing secretion. The Lumenal portion of the chain corresponds to serine 26–arginine 61. Residues methionine 62–glycine 82 form a helical membrane-spanning segment. At serine 83 to valine 187 the chain is on the cytoplasmic side. Residues isoleucine 188–phenylalanine 208 form a helical membrane-spanning segment. The Lumenal segment spans residues leucine 209–aspartate 230. A helical membrane pass occupies residues alanine 231 to valine 250. Topologically, residues serine 251–serine 256 are cytoplasmic. A helical transmembrane segment spans residues valine 257–phenylalanine 277. Residues arginine 278–proline 329 lie on the Lumenal side of the membrane. A helical membrane pass occupies residues phenylalanine 330 to phenylalanine 350. The Cytoplasmic segment spans residues leucine 351 to serine 372. The chain crosses the membrane as a helical span at residues phenylalanine 373–methionine 393. Residues serine 394–tyrosine 404 lie on the Lumenal side of the membrane. Residues glutamate 405–methionine 425 form a helical membrane-spanning segment. The Cytoplasmic portion of the chain corresponds to asparagine 426–arginine 457. The helical transmembrane segment at valine 458–serine 480 threads the bilayer. At serine 481–serine 483 the chain is on the lumenal side. The helical transmembrane segment at alanine 484–valine 503 threads the bilayer. Topologically, residues arginine 504 to threonine 514 are cytoplasmic. A helical membrane pass occupies residues leucine 515 to proline 535. Topologically, residues arginine 536–aspartate 545 are lumenal. The chain crosses the membrane as a helical span at residues leucine 546–serine 566. Residues threonine 567 to proline 862 lie on the Cytoplasmic side of the membrane. The span at glutamine 668–methionine 686 shows a compositional bias: polar residues. 2 disordered regions span residues glutamine 668–lysine 717 and valine 815–proline 862. Positions serine 689–serine 700 are enriched in low complexity. Residues glutamate 834–aspartate 850 are compositionally biased toward basic and acidic residues.

The protein belongs to the transient receptor potential (TRP) ion channel family.

It is found in the cytoplasm. Its subcellular location is the golgi apparatus membrane. This is an uncharacterized protein from Schizosaccharomyces pombe (strain 972 / ATCC 24843) (Fission yeast).